A 494-amino-acid polypeptide reads, in one-letter code: MPAPAAKDQAWEAVIGLETHVQLGTDSKIFTAASTTFGDEPNTHIDPVVCGLPGTLPVLNQKVLEYAVKAAMALNLNIAEHSKFDRKQYFYPDLPKNYQISQYDEPIAEEGCIEVEVAEKGKDTYLKTIGIERLHMEEDAGKLVHAGSDRLAGSTHSLVDYNRAGVALAEIVSKPDLRTGREAAEYASEIRRIMRYLGVSDGNMQEGSLRCDVNISVRRGPDAPFGTKVEIKNMNSFSAIQKACEYEIKRQIKAYETGEPIVQETRLWDEGKQLTKSMRSKEGASDYRYFPDPDLGPIEVSADQRESWRAELPELPAAKRHRYADELGLSQYDARVLTDERPMADYFEAVVGAGADAKLAANWITGDIAAHVNSNRLSYAELPFRPEKLAEMVQLIDGGKISGKIAKEILPELLEKGGSPKAIVDERGLGIISDPAAIEAIVDELLGAHPDEVEAFRGGKTKLQGFFVGQLMKKTGGKADPKLANQILSKKLKV.

This sequence belongs to the GatB/GatE family. GatB subfamily. In terms of assembly, heterotrimer of A, B and C subunits.

It catalyses the reaction L-glutamyl-tRNA(Gln) + L-glutamine + ATP + H2O = L-glutaminyl-tRNA(Gln) + L-glutamate + ADP + phosphate + H(+). It carries out the reaction L-aspartyl-tRNA(Asn) + L-glutamine + ATP + H2O = L-asparaginyl-tRNA(Asn) + L-glutamate + ADP + phosphate + 2 H(+). Its function is as follows. Allows the formation of correctly charged Asn-tRNA(Asn) or Gln-tRNA(Gln) through the transamidation of misacylated Asp-tRNA(Asn) or Glu-tRNA(Gln) in organisms which lack either or both of asparaginyl-tRNA or glutaminyl-tRNA synthetases. The reaction takes place in the presence of glutamine and ATP through an activated phospho-Asp-tRNA(Asn) or phospho-Glu-tRNA(Gln). The polypeptide is Aspartyl/glutamyl-tRNA(Asn/Gln) amidotransferase subunit B (Synechococcus sp. (strain CC9605)).